A 71-amino-acid polypeptide reads, in one-letter code: Protein CYSTEINE-RICH TRANSMEMBRANE MODULE 8 (71 aa).

Residues M1–Y22 show a composition bias toward polar residues. A disordered region spans residues M1–A35. A helical transmembrane segment spans residues N48 to C64.

It belongs to the CYSTM1 family. In terms of tissue distribution, mostly expressed in stems, siliques, roots and flowers and, to a lower extent, in leaves.

The protein resides in the membrane. The protein localises to the nucleus. In terms of biological role, involved in resistance to abiotic stress. The protein is Protein CYSTEINE-RICH TRANSMEMBRANE MODULE 8 of Arabidopsis thaliana (Mouse-ear cress).